Consider the following 298-residue polypeptide: Ribosomal protein L11 methyltransferase (298 aa).

Residues T139, G163, D185, and N232 each contribute to the S-adenosyl-L-methionine site.

Belongs to the methyltransferase superfamily. PrmA family.

The protein resides in the cytoplasm. The catalysed reaction is L-lysyl-[protein] + 3 S-adenosyl-L-methionine = N(6),N(6),N(6)-trimethyl-L-lysyl-[protein] + 3 S-adenosyl-L-homocysteine + 3 H(+). In terms of biological role, methylates ribosomal protein L11. The polypeptide is Ribosomal protein L11 methyltransferase (Microcystis aeruginosa (strain NIES-843 / IAM M-2473)).